The following is a 478-amino-acid chain: Cytochrome c-552 (478 aa).

The first 26 residues, 1-26 (MARKTLRARRFFSLIFPFFFMTSVYA), serve as a signal peptide directing secretion. A heme c-binding site is contributed by His94. Residues Cys122, Cys125, and Lys126 each coordinate heme. Heme c-binding residues include Cys160, Cys163, His164, Cys209, Cys212, and His213. Residues Glu215, Tyr216, Lys261, and Gln263 each contribute to the Ca(2+) site. Tyr216 lines the substrate pocket. His264 is a binding site for substrate. Heme c-binding residues include His275, Cys282, Cys285, His286, His301, Cys314, Cys317, His318, and His393.

It belongs to the cytochrome c-552 family. It depends on Ca(2+) as a cofactor. The cofactor is heme c.

The protein localises to the periplasm. The catalysed reaction is 6 Fe(III)-[cytochrome c] + NH4(+) + 2 H2O = 6 Fe(II)-[cytochrome c] + nitrite + 8 H(+). It participates in nitrogen metabolism; nitrate reduction (assimilation). Catalyzes the reduction of nitrite to ammonia, consuming six electrons in the process. The chain is Cytochrome c-552 from Salmonella arizonae (strain ATCC BAA-731 / CDC346-86 / RSK2980).